The primary structure comprises 406 residues: Arginine decarboxylase (406 aa).

K8 is subject to N6-(pyridoxal phosphate)lysine. 192 to 202 (VDFGGGLGIDY) serves as a coordination point for substrate.

It belongs to the Orn/Lys/Arg decarboxylase class-II family. SpeA subfamily. Pyridoxal 5'-phosphate is required as a cofactor. Requires Mg(2+) as cofactor.

The catalysed reaction is L-arginine + H(+) = agmatine + CO2. Its pathway is amine and polyamine biosynthesis; agmatine biosynthesis; agmatine from L-arginine: step 1/1. This chain is Arginine decarboxylase (SPE2), found in Theobroma cacao (Cacao).